Reading from the N-terminus, the 88-residue chain is Sec-independent protein translocase protein TatA (88 aa).

Residues 3–23 form a helical membrane-spanning segment; it reads IFGVGLPEVTVILILALLIFG. Residues 56 to 66 show a composition bias toward basic and acidic residues; it reads MKEEDKDESPK. Residues 56-88 are disordered; the sequence is MKEEDKDESPKSIESNQSNEINQEKIDSENSNN. A compositionally biased stretch (polar residues) spans 67–76; that stretch reads SIESNQSNEI. Residues 77–88 show a composition bias toward basic and acidic residues; it reads NQEKIDSENSNN.

The protein belongs to the TatA/E family. Forms a complex with TatC.

It localises to the cell inner membrane. Functionally, part of the twin-arginine translocation (Tat) system that transports large folded proteins containing a characteristic twin-arginine motif in their signal peptide across membranes. TatA could form the protein-conducting channel of the Tat system. This Prochlorococcus marinus (strain MIT 9301) protein is Sec-independent protein translocase protein TatA.